Here is a 361-residue protein sequence, read N- to C-terminus: Protein-glutamate methylesterase/protein-glutamine glutaminase 1 (361 aa).

A Response regulatory domain is found at 10 to 127; it reads KVLVVDDSAL…REGIEEKAQE (118 aa). A 4-aspartylphosphate modification is found at Asp-61. A CheB-type methylesterase domain is found at 167–359; sequence FATTDKLIAV…ASVKRWYAEN (193 aa). Catalysis depends on residues Ser-179, His-205, and Asp-301.

Belongs to the CheB family. Post-translationally, phosphorylated by CheA. Phosphorylation of the N-terminal regulatory domain activates the methylesterase activity.

Its subcellular location is the cytoplasm. The catalysed reaction is [protein]-L-glutamate 5-O-methyl ester + H2O = L-glutamyl-[protein] + methanol + H(+). The enzyme catalyses L-glutaminyl-[protein] + H2O = L-glutamyl-[protein] + NH4(+). Its function is as follows. Involved in chemotaxis. Part of a chemotaxis signal transduction system that modulates chemotaxis in response to various stimuli. Catalyzes the demethylation of specific methylglutamate residues introduced into the chemoreceptors (methyl-accepting chemotaxis proteins or MCP) by CheR. Also mediates the irreversible deamidation of specific glutamine residues to glutamic acid. This chain is Protein-glutamate methylesterase/protein-glutamine glutaminase 1, found in Hahella chejuensis (strain KCTC 2396).